Here is a 286-residue protein sequence, read N- to C-terminus: Probable transport system permease protein NifC (286 aa).

Transmembrane regions (helical) follow at residues 34-54 (LFLA…ISMI), 75-95 (IILS…IGTP), 114-134 (IFVE…LLLA), 152-172 (VIFT…ALYV), 216-236 (GLIL…MFAG), and 257-277 (IKMA…LLLL). Residues 75-278 (IILSFVTSLI…IMTFVLLLLV (204 aa)) form the ABC transmembrane type-1 domain.

This sequence belongs to the binding-protein-dependent transport system permease family. CysTW subfamily.

It localises to the cell membrane. Functionally, may be involved in molybdenum transport. The protein is Probable transport system permease protein NifC (nifC) of Clostridium pasteurianum.